We begin with the raw amino-acid sequence, 269 residues long: GTP cyclohydrolase FolE2 (269 aa).

Belongs to the GTP cyclohydrolase IV family.

It catalyses the reaction GTP + H2O = 7,8-dihydroneopterin 3'-triphosphate + formate + H(+). It participates in cofactor biosynthesis; 7,8-dihydroneopterin triphosphate biosynthesis; 7,8-dihydroneopterin triphosphate from GTP: step 1/1. Converts GTP to 7,8-dihydroneopterin triphosphate. In Azoarcus sp. (strain BH72), this protein is GTP cyclohydrolase FolE2.